We begin with the raw amino-acid sequence, 411 residues long: Serine hydroxymethyltransferase (411 aa).

120–122 (GHL) is a binding site for (6S)-5,6,7,8-tetrahydrofolate. K225 carries the N6-(pyridoxal phosphate)lysine modification. Position 350–352 (350–352 (SPF)) interacts with (6S)-5,6,7,8-tetrahydrofolate.

It belongs to the SHMT family. As to quaternary structure, homodimer. Pyridoxal 5'-phosphate is required as a cofactor.

The protein resides in the cytoplasm. It carries out the reaction (6R)-5,10-methylene-5,6,7,8-tetrahydrofolate + glycine + H2O = (6S)-5,6,7,8-tetrahydrofolate + L-serine. The protein operates within one-carbon metabolism; tetrahydrofolate interconversion. Its pathway is amino-acid biosynthesis; glycine biosynthesis; glycine from L-serine: step 1/1. Functionally, catalyzes the reversible interconversion of serine and glycine with tetrahydrofolate (THF) serving as the one-carbon carrier. This reaction serves as the major source of one-carbon groups required for the biosynthesis of purines, thymidylate, methionine, and other important biomolecules. Also exhibits THF-independent aldolase activity toward beta-hydroxyamino acids, producing glycine and aldehydes, via a retro-aldol mechanism. The protein is Serine hydroxymethyltransferase of Lactobacillus acidophilus (strain ATCC 700396 / NCK56 / N2 / NCFM).